A 540-amino-acid polypeptide reads, in one-letter code: Dynein axonemal assembly factor 3 homolog (540 aa).

Residues 480–499 (AVTEAMPESTFKYDTDTDYG) form a disordered region.

This sequence belongs to the DNAAF3 family. As to expression, expressed in mechanosensory chordotonal (Ch) neurons, spermatocytes and spermatids (at protein level).

It is found in the cytoplasm. It localises to the dynein axonemal particle. Functionally, required for the assembly of axonemal inner and outer dynein arms. Involved in the cytoplasmic preassembly of dyneins into complexes before their transport into cilia. Essential for the development of axonemal dynein motors in the sensory cilium of mechanosensory chordotonal (Ch) neurons and sperm flagellum, and consequently, is required for the mechanotransduction process of hearing and sperm mobility. The protein is Dynein axonemal assembly factor 3 homolog of Drosophila melanogaster (Fruit fly).